Reading from the N-terminus, the 380-residue chain is Queuine tRNA-ribosyltransferase (380 aa).

The Proton acceptor role is filled by aspartate 96. Residues 96–100 (DSGGF), aspartate 150, glutamine 193, and glycine 220 each bind substrate. Residues 251–257 (GVGAPDS) form an RNA binding region. Aspartate 270 acts as the Nucleophile in catalysis. The RNA binding; important for wobble base 34 recognition stretch occupies residues 275–279 (TRIAR). Cysteine 308, cysteine 310, cysteine 313, and histidine 339 together coordinate Zn(2+).

The protein belongs to the queuine tRNA-ribosyltransferase family. In terms of assembly, homodimer. Within each dimer, one monomer is responsible for RNA recognition and catalysis, while the other monomer binds to the replacement base PreQ1. Requires Zn(2+) as cofactor.

It carries out the reaction 7-aminomethyl-7-carbaguanine + guanosine(34) in tRNA = 7-aminomethyl-7-carbaguanosine(34) in tRNA + guanine. The protein operates within tRNA modification; tRNA-queuosine biosynthesis. Functionally, catalyzes the base-exchange of a guanine (G) residue with the queuine precursor 7-aminomethyl-7-deazaguanine (PreQ1) at position 34 (anticodon wobble position) in tRNAs with GU(N) anticodons (tRNA-Asp, -Asn, -His and -Tyr). Catalysis occurs through a double-displacement mechanism. The nucleophile active site attacks the C1' of nucleotide 34 to detach the guanine base from the RNA, forming a covalent enzyme-RNA intermediate. The proton acceptor active site deprotonates the incoming PreQ1, allowing a nucleophilic attack on the C1' of the ribose to form the product. After dissociation, two additional enzymatic reactions on the tRNA convert PreQ1 to queuine (Q), resulting in the hypermodified nucleoside queuosine (7-(((4,5-cis-dihydroxy-2-cyclopenten-1-yl)amino)methyl)-7-deazaguanosine). The polypeptide is Queuine tRNA-ribosyltransferase (Streptococcus pyogenes serotype M49 (strain NZ131)).